A 443-amino-acid polypeptide reads, in one-letter code: Threonine/serine transporter TdcC (443 aa).

The next 11 helical transmembrane spans lie at 22 to 42 (TTWT…FFPI), 44 to 64 (AGFG…PIAF), 97 to 117 (GVVI…IYGV), 140 to 160 (FVAL…KDLM), 163 to 183 (VMSY…LSLI), 207 to 227 (ILIT…FSPI), 261 to 281 (MLMV…LSPA), 312 to 332 (AITL…KSFF), 366 to 386 (ISMI…PNIL), 389 to 409 (IEAM…MYAI), and 423 to 443 (DNVF…YKLF).

Belongs to the amino acid/polyamine transporter 2 family. SdaC/TdcC subfamily.

It localises to the cell inner membrane. The catalysed reaction is L-threonine(in) + H(+)(in) = L-threonine(out) + H(+)(out). It carries out the reaction L-serine(in) + H(+)(in) = L-serine(out) + H(+)(out). In terms of biological role, involved in the import of threonine and serine into the cell, with the concomitant import of a proton (symport system). The polypeptide is Threonine/serine transporter TdcC (Escherichia coli O45:K1 (strain S88 / ExPEC)).